The sequence spans 189 residues: Probable nicotinate-nucleotide adenylyltransferase (189 aa).

Belongs to the NadD family.

It catalyses the reaction nicotinate beta-D-ribonucleotide + ATP + H(+) = deamido-NAD(+) + diphosphate. It functions in the pathway cofactor biosynthesis; NAD(+) biosynthesis; deamido-NAD(+) from nicotinate D-ribonucleotide: step 1/1. Functionally, catalyzes the reversible adenylation of nicotinate mononucleotide (NaMN) to nicotinic acid adenine dinucleotide (NaAD). The sequence is that of Probable nicotinate-nucleotide adenylyltransferase from Hydrogenobaculum sp. (strain Y04AAS1).